We begin with the raw amino-acid sequence, 898 residues long: Protein argonaute 1 (898 aa).

The segment at 1–52 is disordered; the sequence is MLALNAGSQYPGRGRGRGRGDGGNRVHKHDGINRYHGGFRGGRGGGGGGFRD. A compositionally biased stretch (basic and acidic residues) spans 18–33; the sequence is GRGDGGNRVHKHDGIN. The segment covering 38 to 50 has biased composition (gly residues); sequence GFRGGRGGGGGGF. Positions 283–378 constitute a PAZ domain; that stretch reads KCSDEMRRLR…IFADRTKMSR (96 aa). Residues 542 to 883 enclose the Piwi domain; sequence FAMVKLRTKE…YARKYGSLKS (342 aa).

Belongs to the argonaute family.

The protein resides in the cytoplasm. Its function is as follows. Involved in RNA-mediated gene silencing (RNAi) of mobile elements and repeats including retroposons SLACS (Spliced Leader Associated Conserved Sequence), TATE (Telomere-Associated Transposable Element) and TAS-like sequences (Telomere Associated Sequence), and a family of 74-nucleotide long tandem repeats, CIR74. Predominantly binds to siRNAs derived from SLACS and TATE transposable elements and to a lesser extent to siRNAs from TAS-like and CIR74 elements. The chain is Protein argonaute 1 from Leishmania braziliensis.